A 329-amino-acid chain; its full sequence is Phenylalanine--tRNA ligase alpha subunit (329 aa).

The protein belongs to the class-II aminoacyl-tRNA synthetase family. Phe-tRNA synthetase alpha subunit type 1 subfamily. In terms of assembly, tetramer of two alpha and two beta subunits. It depends on Mg(2+) as a cofactor.

It is found in the cytoplasm. It catalyses the reaction tRNA(Phe) + L-phenylalanine + ATP = L-phenylalanyl-tRNA(Phe) + AMP + diphosphate + H(+). The polypeptide is Phenylalanine--tRNA ligase alpha subunit (pheS) (Buchnera aphidicola subsp. Acyrthosiphon pisum (strain APS) (Acyrthosiphon pisum symbiotic bacterium)).